A 251-amino-acid polypeptide reads, in one-letter code: Large ribosomal subunit protein uL16m (251 aa).

The transit peptide at 1–29 (MWRLLTRVPAPLLRMHFSDSWAALPTSAG) directs the protein to the mitochondrion.

This sequence belongs to the universal ribosomal protein uL16 family. In terms of assembly, component of the mitochondrial ribosome large subunit (39S) which comprises a 16S rRNA and about 50 distinct proteins.

It is found in the mitochondrion. The polypeptide is Large ribosomal subunit protein uL16m (Mrpl16) (Mus musculus (Mouse)).